Here is a 1458-residue protein sequence, read N- to C-terminus: GTPase-activating protein and VPS9 domain-containing protein 1 (1458 aa).

One can recognise a Ras-GAP domain in the interval 147–385; sequence SYLLQVLRYL…AAFLDVVIGG (239 aa). Ser-227 is modified (phosphoserine). Phosphothreonine occurs at positions 390 and 458. Residues 447-475 are disordered; it reads AKPGKSSSLDMTPYSTPQMSPATTPANKK. The segment covering 451–473 has biased composition (polar residues); that stretch reads KSSSLDMTPYSTPQMSPATTPAN. Position 460 is a phosphotyrosine (Tyr-460). A Phosphoserine modification is found at Ser-466. Thr-470 carries the post-translational modification Phosphothreonine. Phosphoserine occurs at positions 566 and 569. Disordered stretches follow at residues 574 to 608, 738 to 821, and 846 to 867; these read GISEGPSNRSNSVSSLDLEGESVSELGAGPSGSNG, LESC…PSQS, and HYARPSHPPPDPPILEGAVGGN. The segment covering 578–588 has biased composition (polar residues); that stretch reads GPSNRSNSVSS. Ser-742, Ser-746, and Ser-757 each carry phosphoserine. Polar residues predominate over residues 758–777; the sequence is SRPSTPGLSVVSGISATSED. Position 762 is a phosphothreonine (Thr-762). A Phosphoserine modification is found at Ser-766. Positions 778-789 are enriched in basic and acidic residues; the sequence is IPNKIEDLRSEC. Phosphoserine occurs at positions 876, 902, 903, 908, and 914. Over residues 888–902 the composition is skewed to basic and acidic residues; the sequence is KQRHSYPERLVRSRS. Disordered stretches follow at residues 888 to 1022 and 1039 to 1072; these read KQRH…RLSA and KRTSPSEGAMANDESAEVMGDGESAHDSPREEAL. Over residues 930 to 951 the composition is skewed to low complexity; sequence AAATGATSLVAAPHSSSSSPSK. Composition is skewed to basic and acidic residues over residues 952–973 and 995–1006; these read DSSRGETEERKDSDDERSDRSR and EKQEKDKDDLGP. Residue Ser-964 is modified to Phosphoserine. Positions 1010 to 1022 are enriched in polar residues; it reads STLTDEPSPRLSA. A phosphoserine mark is found at Ser-1017 and Ser-1044. Over residues 1061–1071 the composition is skewed to basic and acidic residues; sequence ESAHDSPREEA. Phosphoserine occurs at positions 1076 and 1083. The region spanning 1318–1458 is the VPS9 domain; that stretch reads ILRDQVLHEH…EFIKTIDDRK (141 aa).

Belongs to the GAPVD1 family. As to quaternary structure, interacts with RAB5A. Interacts with TRIP10/CIP4. In terms of tissue distribution, present in adipocytes and fibroblasts (at protein level). Ubiquitously expressed.

Its subcellular location is the membrane. It localises to the endosome. Its function is as follows. Acts both as a GTPase-activating protein (GAP) and a guanine nucleotide exchange factor (GEF), and participates in various processes such as endocytosis, insulin receptor internalization or LC2A4/GLUT4 trafficking. Acts as a GEF for the Ras-related protein RAB31 by exchanging bound GDP for free GTP, leading to regulate LC2A4/GLUT4 trafficking. In the absence of insulin, it maintains RAB31 in an active state and promotes a futile cycle between LC2A4/GLUT4 storage vesicles and early endosomes, retaining LC2A4/GLUT4 inside the cells. Upon insulin stimulation, it is translocated to the plasma membrane, releasing LC2A4/GLUT4 from intracellular storage vesicles. Also involved in EGFR trafficking and degradation, possibly by promoting EGFR ubiquitination and subsequent degradation by the proteasome. Has GEF activity for Rab5 and GAP activity for Ras. This chain is GTPase-activating protein and VPS9 domain-containing protein 1 (Gapvd1), found in Mus musculus (Mouse).